Consider the following 2056-residue polypeptide: E3 ubiquitin-protein ligase TRIP12 (2056 aa).

Polar residues-rich tracts occupy residues 1-10 (MSSRPNNNPG) and 18-27 (RNTAGAQPQE). The interval 1–440 (MSSRPNNNPG…SGESESDDSE (440 aa)) is disordered. Residues 39 to 51 (AENKTHSLPESRK) show a composition bias toward basic and acidic residues. Polar residues-rich tracts occupy residues 58-67 (KVQSNTTSGP) and 153-168 (SQEQ…STSK). Low complexity-rich tracts occupy residues 213–226 (LSKL…SAKA) and 234–253 (SSSS…VSAA). 2 stretches are compositionally biased toward polar residues: residues 317–327 (PGSSKTETSKP) and 363–375 (QKTT…TSRR). Positions 383–395 (AAAEARRQEKMAD) are enriched in basic and acidic residues. Over residues 415–433 (GAAASSSVAGAVGMTTSGE) the composition is skewed to low complexity. The 115-residue stretch at 791–905 (MLKKGNAQNT…DPELAKSFIK (115 aa)) folds into the WWE domain. Residues 1027-1042 (TTISTGSGTASGNSAA) are compositionally biased toward low complexity. Disordered regions lie at residues 1027 to 1147 (TTIS…ASKD), 1465 to 1500 (EEEE…DELW), and 1632 to 1651 (TNPE…PRLD). Over residues 1069-1082 (KRKRLPKRGPRRPK) the composition is skewed to basic residues. Residues 1085-1094 (PPRDEDKVDN) show a composition bias toward basic and acidic residues. 2 stretches are compositionally biased toward polar residues: residues 1095–1106 (QAKSPTTTQSPK) and 1119–1129 (RLSTQSNSNNI). Residues 1560-1634 (EIIPTSEFNN…AMQRLLDTNP (75 aa)) are K-box. Positions 1949-2056 (PDHGYTHDSR…REGQQSFHLS (108 aa)) constitute an HECT domain. Cys2023 functions as the Glycyl thioester intermediate in the catalytic mechanism.

The protein belongs to the UPL family. K-HECT subfamily.

The protein resides in the nucleus. Its subcellular location is the nucleoplasm. The catalysed reaction is S-ubiquitinyl-[E2 ubiquitin-conjugating enzyme]-L-cysteine + [acceptor protein]-L-lysine = [E2 ubiquitin-conjugating enzyme]-L-cysteine + N(6)-ubiquitinyl-[acceptor protein]-L-lysine.. It functions in the pathway protein modification; protein ubiquitination. Its function is as follows. E3 ubiquitin-protein ligase involved in ubiquitin fusion degradation (UFD) pathway and regulation of DNA repair. Part of the ubiquitin fusion degradation (UFD) pathway, a process that mediates ubiquitination of protein at their N-terminus, regardless of the presence of lysine residues in target proteins. Acts as a key regulator of DNA damage response by acting as a suppressor of RNF168, an E3 ubiquitin-protein ligase that promotes accumulation of 'Lys-63'-linked histone H2A and H2AX at DNA damage sites, thereby acting as a guard against excessive spreading of ubiquitinated chromatin at damaged chromosomes. This Xenopus tropicalis (Western clawed frog) protein is E3 ubiquitin-protein ligase TRIP12 (trip12).